The chain runs to 119 residues: Protein yippee-like 1 (119 aa).

In terms of domain architecture, Yippee spans 19-116 (RTYSCIHCRA…IELAHMIKDN (98 aa)). The Zn(2+) site is built by cysteine 23, cysteine 26, cysteine 79, and cysteine 82. The Nuclear localization signal signature appears at 99-104 (KYKEGK).

The protein belongs to the yippee family.

It is found in the nucleus. May play a role in epithelioid conversion of fibroblasts. In Chlorocebus aethiops (Green monkey), this protein is Protein yippee-like 1 (YPEL1).